Here is a 123-residue protein sequence, read N- to C-terminus: Large ribosomal subunit protein bL12 (123 aa).

Positions 96–123 (NVKEGVSKEEAEGLKKSLEEAGATVELK) are disordered. A compositionally biased stretch (basic and acidic residues) spans 100–114 (GVSKEEAEGLKKSLE).

This sequence belongs to the bacterial ribosomal protein bL12 family. Homodimer. Part of the ribosomal stalk of the 50S ribosomal subunit. Forms a multimeric L10(L12)X complex, where L10 forms an elongated spine to which 2 to 4 L12 dimers bind in a sequential fashion. Binds GTP-bound translation factors.

Functionally, forms part of the ribosomal stalk which helps the ribosome interact with GTP-bound translation factors. Is thus essential for accurate translation. The chain is Large ribosomal subunit protein bL12 from Flavobacterium johnsoniae (strain ATCC 17061 / DSM 2064 / JCM 8514 / BCRC 14874 / CCUG 350202 / NBRC 14942 / NCIMB 11054 / UW101) (Cytophaga johnsonae).